The primary structure comprises 408 residues: Multifunctional CCA protein (408 aa).

Residues G8 and R11 each contribute to the ATP site. G8 and R11 together coordinate CTP. Residues D21 and D23 each coordinate Mg(2+). Residues R91, R137, and R140 each contribute to the ATP site. Residues R91, R137, and R140 each coordinate CTP. The HD domain maps to S228–W329.

The protein belongs to the tRNA nucleotidyltransferase/poly(A) polymerase family. Bacterial CCA-adding enzyme type 1 subfamily. As to quaternary structure, monomer. Can also form homodimers and oligomers. Requires Mg(2+) as cofactor. Ni(2+) is required as a cofactor.

It catalyses the reaction a tRNA precursor + 2 CTP + ATP = a tRNA with a 3' CCA end + 3 diphosphate. The catalysed reaction is a tRNA with a 3' CCA end + 2 CTP + ATP = a tRNA with a 3' CCACCA end + 3 diphosphate. Catalyzes the addition and repair of the essential 3'-terminal CCA sequence in tRNAs without using a nucleic acid template. Adds these three nucleotides in the order of C, C, and A to the tRNA nucleotide-73, using CTP and ATP as substrates and producing inorganic pyrophosphate. tRNA 3'-terminal CCA addition is required both for tRNA processing and repair. Also involved in tRNA surveillance by mediating tandem CCA addition to generate a CCACCA at the 3' terminus of unstable tRNAs. While stable tRNAs receive only 3'-terminal CCA, unstable tRNAs are marked with CCACCA and rapidly degraded. The protein is Multifunctional CCA protein of Shewanella piezotolerans (strain WP3 / JCM 13877).